A 153-amino-acid polypeptide reads, in one-letter code: Prefoldin subunit alpha (153 aa).

This sequence belongs to the prefoldin subunit alpha family. As to quaternary structure, heterohexamer of two alpha and four beta subunits.

It localises to the cytoplasm. Its function is as follows. Molecular chaperone capable of stabilizing a range of proteins. Seems to fulfill an ATP-independent, HSP70-like function in archaeal de novo protein folding. In Methanothrix thermoacetophila (strain DSM 6194 / JCM 14653 / NBRC 101360 / PT) (Methanosaeta thermophila), this protein is Prefoldin subunit alpha.